Reading from the N-terminus, the 186-residue chain is Lipid A palmitoyltransferase PagP (186 aa).

A signal peptide spans 1 to 25; that stretch reads MNVSKYVAIFSFVFIQLISVGKVFA. Residues His58, Asp101, and Ser102 contribute to the active site.

It belongs to the lipid A palmitoyltransferase family. In terms of assembly, homodimer.

The protein localises to the cell outer membrane. It carries out the reaction lipid A (E. coli) + a 1-hexadecanoyl-2-acyl-sn-glycero-3-phosphocholine = hepta-acyl lipid A (E. coli) + a 2-acyl-sn-glycero-3-phosphocholine. It catalyses the reaction lipid IIA + a 1-hexadecanoyl-2-acyl-sn-glycero-3-phosphocholine = lipid IIB + a 2-acyl-sn-glycero-3-phosphocholine. The enzyme catalyses lipid IVA (E. coli) + a 1-hexadecanoyl-2-acyl-sn-glycero-3-phosphocholine = lipid IVB (E. coli) + a 2-acyl-sn-glycero-3-phosphocholine. Its function is as follows. Transfers a palmitate residue from the sn-1 position of a phospholipid to the N-linked hydroxymyristate on the proximal unit of lipid A or its precursors. The protein is Lipid A palmitoyltransferase PagP of Escherichia coli (strain ATCC 55124 / KO11FL).